Consider the following 341-residue polypeptide: tRNA N6-adenosine threonylcarbamoyltransferase (341 aa).

Fe cation is bound by residues His115 and His119. Substrate contacts are provided by residues 137–141 (AVSGG), Asp170, Gly183, Asp187, and Asn276. Asp306 contributes to the Fe cation binding site.

The protein belongs to the KAE1 / TsaD family. Fe(2+) serves as cofactor.

The protein localises to the cytoplasm. It catalyses the reaction L-threonylcarbamoyladenylate + adenosine(37) in tRNA = N(6)-L-threonylcarbamoyladenosine(37) in tRNA + AMP + H(+). In terms of biological role, required for the formation of a threonylcarbamoyl group on adenosine at position 37 (t(6)A37) in tRNAs that read codons beginning with adenine. Is involved in the transfer of the threonylcarbamoyl moiety of threonylcarbamoyl-AMP (TC-AMP) to the N6 group of A37, together with TsaE and TsaB. TsaD likely plays a direct catalytic role in this reaction. The chain is tRNA N6-adenosine threonylcarbamoyltransferase from Lacticaseibacillus casei (strain BL23) (Lactobacillus casei).